Here is a 129-residue protein sequence, read N- to C-terminus: Large-conductance mechanosensitive channel (129 aa).

The next 3 helical transmembrane spans lie at 8-28, 30-50, and 67-87; these read FAFR…AAFS, IIKS…IGGI, and GQFL…FLFV.

The protein belongs to the MscL family. Homopentamer.

The protein localises to the cell membrane. Functionally, channel that opens in response to stretch forces in the membrane lipid bilayer. May participate in the regulation of osmotic pressure changes within the cell. This is Large-conductance mechanosensitive channel from Exiguobacterium sibiricum (strain DSM 17290 / CCUG 55495 / CIP 109462 / JCM 13490 / 255-15).